A 271-amino-acid chain; its full sequence is MSKYRSPKTKKSIQATLQFKSTPTLVKCPKCSITYSTNSPSDLVQHKRYHDLHLNGKRWSQSWGDIINRVEALKTEKQLKYSMVSEKDKKVMSFQLPSQTLYEEDEYIVMISPKKANEVKAALDLMSIVNEELNAPHDENAFWSEVDKSGKSQGKAFIYVKKNRAVGVITIEYIENTNRGKWMVLDTKAIVPNVVPDVKLGISRIWVCRNQRQHGIATRLLEVARKKSIYGCIVNKWELAWSQPSQSGSILAKSYNAAKHRSGKLLIPCYI.

The CCHH-type zinc finger occupies 26 to 50 (VKCPKCSITYSTNSPSDLVQHKRYH). The N-acetyltransferase domain occupies 109–271 (VMISPKKANE…SGKLLIPCYI (163 aa)).

This sequence belongs to the acetyltransferase family. ECO subfamily.

The protein localises to the nucleus. Functionally, probable acetyltransferase required for the establishment of sister chromatid cohesion and couple the processes of cohesion and DNA replication to ensure that only sister chromatids become paired together. In contrast to the structural cohesins, the deposition and establishment factors are required only during S phase. Acts by acetylating the cohesin complex component SMC3. In Kluyveromyces lactis (strain ATCC 8585 / CBS 2359 / DSM 70799 / NBRC 1267 / NRRL Y-1140 / WM37) (Yeast), this protein is N-acetyltransferase ECO1 (ECO1).